We begin with the raw amino-acid sequence, 60 residues long: MAVPKRKKSKSRRNMHRSHHAIEPKNVVVCSTTGEFMLPHNVAVDGSYKGKRVFIKQQAE.

The span at 1–19 shows a compositional bias: basic residues; that stretch reads MAVPKRKKSKSRRNMHRSH. The interval 1-24 is disordered; sequence MAVPKRKKSKSRRNMHRSHHAIEP.

The protein belongs to the bacterial ribosomal protein bL32 family.

In Wolbachia pipientis wMel, this protein is Large ribosomal subunit protein bL32.